The primary structure comprises 353 residues: Uroporphyrinogen decarboxylase (353 aa).

Substrate-binding positions include 27-31, Phe-46, Asp-76, Tyr-152, Ser-207, and His-321; that span reads RQAGR.

The protein belongs to the uroporphyrinogen decarboxylase family. As to quaternary structure, homodimer.

It localises to the cytoplasm. The enzyme catalyses uroporphyrinogen III + 4 H(+) = coproporphyrinogen III + 4 CO2. Its pathway is porphyrin-containing compound metabolism; protoporphyrin-IX biosynthesis; coproporphyrinogen-III from 5-aminolevulinate: step 4/4. Catalyzes the decarboxylation of four acetate groups of uroporphyrinogen-III to yield coproporphyrinogen-III. This chain is Uroporphyrinogen decarboxylase, found in Listeria monocytogenes serotype 4b (strain CLIP80459).